The chain runs to 90 residues: MALDSAKKAEIVAKFARKEGDTGSPEVQIALLSARISDLTEHLKIYKKDFSSRLGLLKLVGQRKRLLSYLKRKDYQAYSKLISELNLRDK.

It belongs to the universal ribosomal protein uS15 family. Part of the 30S ribosomal subunit. Forms a bridge to the 50S subunit in the 70S ribosome, contacting the 23S rRNA.

One of the primary rRNA binding proteins, it binds directly to 16S rRNA where it helps nucleate assembly of the platform of the 30S subunit by binding and bridging several RNA helices of the 16S rRNA. Functionally, forms an intersubunit bridge (bridge B4) with the 23S rRNA of the 50S subunit in the ribosome. The sequence is that of Small ribosomal subunit protein uS15 from Campylobacter lari (strain RM2100 / D67 / ATCC BAA-1060).